Here is a 365-residue protein sequence, read N- to C-terminus: UDP-N-acetylglucosamine--N-acetylmuramyl-(pentapeptide) pyrophosphoryl-undecaprenol N-acetylglucosamine transferase (365 aa).

Residues 10–12 (TGG), Asn-128, Arg-170, Ser-199, Ile-250, and Gln-295 contribute to the UDP-N-acetyl-alpha-D-glucosamine site.

This sequence belongs to the glycosyltransferase 28 family. MurG subfamily.

It localises to the cell inner membrane. The catalysed reaction is di-trans,octa-cis-undecaprenyl diphospho-N-acetyl-alpha-D-muramoyl-L-alanyl-D-glutamyl-meso-2,6-diaminopimeloyl-D-alanyl-D-alanine + UDP-N-acetyl-alpha-D-glucosamine = di-trans,octa-cis-undecaprenyl diphospho-[N-acetyl-alpha-D-glucosaminyl-(1-&gt;4)]-N-acetyl-alpha-D-muramoyl-L-alanyl-D-glutamyl-meso-2,6-diaminopimeloyl-D-alanyl-D-alanine + UDP + H(+). Its pathway is cell wall biogenesis; peptidoglycan biosynthesis. Functionally, cell wall formation. Catalyzes the transfer of a GlcNAc subunit on undecaprenyl-pyrophosphoryl-MurNAc-pentapeptide (lipid intermediate I) to form undecaprenyl-pyrophosphoryl-MurNAc-(pentapeptide)GlcNAc (lipid intermediate II). This is UDP-N-acetylglucosamine--N-acetylmuramyl-(pentapeptide) pyrophosphoryl-undecaprenol N-acetylglucosamine transferase from Prosthecochloris aestuarii (strain DSM 271 / SK 413).